Here is a 236-residue protein sequence, read N- to C-terminus: Carbonyl reductase family member 4 (236 aa).

NADP(+) is bound by residues 11 to 14, 34 to 35, aspartate 55, and 82 to 84; these read SRGI, RD, and SAG. Serine 134 is a binding site for substrate. Residues tyrosine 147, lysine 151, and 180 to 182 contribute to the NADP(+) site; that span reads IHT. Tyrosine 147 acts as the Proton acceptor in catalysis.

The protein belongs to the short-chain dehydrogenases/reductases (SDR) family. In terms of assembly, homotetramer (in vitro). Heterotetramer with HSD17B8; contains two molecules each of HSD17B8 and CBR4.

Its subcellular location is the mitochondrion matrix. It participates in lipid metabolism; fatty acid biosynthesis. In terms of biological role, the heterotetramer with HSD17B8 has NADH-dependent 3-ketoacyl-acyl carrier protein reductase activity, and thereby plays a role in mitochondrial fatty acid biosynthesis. Within the heterotetramer, HSD17B8 binds NADH; CBR4 binds NADPD. The homotetramer has NADPH-dependent quinone reductase activity. Both homotetramer and the heterotetramer have broad in vitro substrate specificity and can reduce 9,10-phenanthrenequinone, 1,4-benzoquinone and various other o-quinones and p-quinones. This Xenopus tropicalis (Western clawed frog) protein is Carbonyl reductase family member 4 (cbr4).